An 860-amino-acid polypeptide reads, in one-letter code: DNA mismatch repair protein MutS (860 aa).

618 to 625 (GPNMGGKS) is an ATP binding site.

It belongs to the DNA mismatch repair MutS family.

Functionally, this protein is involved in the repair of mismatches in DNA. It is possible that it carries out the mismatch recognition step. This protein has a weak ATPase activity. This chain is DNA mismatch repair protein MutS, found in Shewanella piezotolerans (strain WP3 / JCM 13877).